The following is a 34-amino-acid chain: Histone H1, sperm (34 aa).

A disordered region spans residues 1–34; that stretch reads PASPQKRAASPRRSPKKSPRKSPKKSPRKRSASP. The segment covering 9 to 34 has biased composition (basic residues); that stretch reads ASPRRSPKKSPRKSPKKSPRKRSASP.

Belongs to the histone H1/H5 family. In terms of tissue distribution, sperm.

The protein resides in the nucleus. Its subcellular location is the chromosome. Its function is as follows. Histones H1 are necessary for the condensation of nucleosome chains into higher-order structures. The protein is Histone H1, sperm of Strongylocentrotus purpuratus (Purple sea urchin).